Here is a 317-residue protein sequence, read N- to C-terminus: Lipoyl synthase (317 aa).

The interval 1–28 (MDSQPQSKKAARGADKTARNPIPIIPAP) is disordered. Positions 64, 69, 75, 90, 94, 97, and 304 each coordinate [4Fe-4S] cluster. Residues 76–293 (FGGGTATFMI…QRDGMAMGFR (218 aa)) form the Radical SAM core domain.

This sequence belongs to the radical SAM superfamily. Lipoyl synthase family. It depends on [4Fe-4S] cluster as a cofactor.

The protein localises to the cytoplasm. It catalyses the reaction [[Fe-S] cluster scaffold protein carrying a second [4Fe-4S](2+) cluster] + N(6)-octanoyl-L-lysyl-[protein] + 2 oxidized [2Fe-2S]-[ferredoxin] + 2 S-adenosyl-L-methionine + 4 H(+) = [[Fe-S] cluster scaffold protein] + N(6)-[(R)-dihydrolipoyl]-L-lysyl-[protein] + 4 Fe(3+) + 2 hydrogen sulfide + 2 5'-deoxyadenosine + 2 L-methionine + 2 reduced [2Fe-2S]-[ferredoxin]. It functions in the pathway protein modification; protein lipoylation via endogenous pathway; protein N(6)-(lipoyl)lysine from octanoyl-[acyl-carrier-protein]: step 2/2. Catalyzes the radical-mediated insertion of two sulfur atoms into the C-6 and C-8 positions of the octanoyl moiety bound to the lipoyl domains of lipoate-dependent enzymes, thereby converting the octanoylated domains into lipoylated derivatives. This chain is Lipoyl synthase, found in Acidithiobacillus ferrooxidans (strain ATCC 23270 / DSM 14882 / CIP 104768 / NCIMB 8455) (Ferrobacillus ferrooxidans (strain ATCC 23270)).